We begin with the raw amino-acid sequence, 444 residues long: Probable galactarate/D-glucarate transporter GarP (444 aa).

Over 1–11 (MILDTVDEKKK) the chain is Cytoplasmic. The helical transmembrane segment at 12-32 (GVHTRYLILLIIFIVTAVNYA) threads the bilayer. The Periplasmic portion of the chain corresponds to 33–56 (DRATLSIAGTEVAKELQLSAVSMG). The helical transmembrane segment at 57-77 (YIFSAFGWAYLLMQIPGGWLL) threads the bilayer. The Cytoplasmic segment spans residues 78-89 (DKFGSKKVYTYS). Helical transmembrane passes span 90-110 (LFFW…PLAW) and 111-131 (AGIS…PSFP). The Cytoplasmic portion of the chain corresponds to 132 to 157 (ANARIVAAWFPTKERGTASAIFNSAQ). Helical transmembrane passes span 158–178 (YFSL…WGWE) and 179–199 (HVFT…IKLI). The Cytoplasmic portion of the chain corresponds to 200–252 (HNPTDHPRMSAEELKFISENGAVVDMDHKKPGSAAASGPKLHYIKQLLSNRMM). Residues 253–273 (LGVFFGQYFINTITWFFLTWF) traverse the membrane as a helical segment. The Periplasmic segment spans residues 274-288 (PIYLVQEKGMSILKV). The helical transmembrane segment at 289–309 (GLVASIPALCGFAGGVLGGVF) threads the bilayer. Over 310 to 319 (SDYLIKRGLS) the chain is Cytoplasmic. A helical membrane pass occupies residues 320–340 (LTLARKLPIVLGMLLASTIIL). Residues 341–350 (CNYTNNTTLV) are Periplasmic-facing. A helical transmembrane segment spans residues 351-371 (VMLMALAFFGKGFGALGWPVI). Topologically, residues 372–385 (SDTAPKEIVGLCGG) are cytoplasmic. A helical transmembrane segment spans residues 386 to 406 (VFNVFGNVASIVTPLVIGYLV). Residues 407–413 (SELHSFN) lie on the Periplasmic side of the membrane. Residues 414–434 (AALVFVGCSALMAMVCYLFVV) traverse the membrane as a helical segment. At 435-444 (GDIKRMELQK) the chain is on the cytoplasmic side.

This sequence belongs to the major facilitator superfamily. Phthalate permease family.

The protein localises to the cell inner membrane. It carries out the reaction galactarate(in) + H(+)(in) = galactarate(out) + H(+)(out). The enzyme catalyses D-glucarate(in) + H(+)(in) = D-glucarate(out) + H(+)(out). It catalyses the reaction (R)-glycerate(in) + H(+)(in) = (R)-glycerate(out) + H(+)(out). Probably involved in the uptake of galactarate and/or D-glucarate. May also transport D-glycerate. In Escherichia coli (strain K12), this protein is Probable galactarate/D-glucarate transporter GarP.